A 106-amino-acid chain; its full sequence is Large ribosomal subunit protein bL21 (106 aa).

It belongs to the bacterial ribosomal protein bL21 family. In terms of assembly, part of the 50S ribosomal subunit. Contacts protein L20.

Its function is as follows. This protein binds to 23S rRNA in the presence of protein L20. The polypeptide is Large ribosomal subunit protein bL21 (Streptomyces griseus subsp. griseus (strain JCM 4626 / CBS 651.72 / NBRC 13350 / KCC S-0626 / ISP 5235)).